A 147-amino-acid chain; its full sequence is 3-dehydroquinate dehydratase (147 aa).

Residue Y23 is the Proton acceptor of the active site. Substrate is bound by residues N74, H80, and D87. H100 serves as the catalytic Proton donor. Substrate-binding positions include 101–102 and R111; that span reads LS.

Belongs to the type-II 3-dehydroquinase family. As to quaternary structure, homododecamer.

It carries out the reaction 3-dehydroquinate = 3-dehydroshikimate + H2O. Its pathway is metabolic intermediate biosynthesis; chorismate biosynthesis; chorismate from D-erythrose 4-phosphate and phosphoenolpyruvate: step 3/7. In terms of biological role, catalyzes a trans-dehydration via an enolate intermediate. This is 3-dehydroquinate dehydratase from Clostridium botulinum (strain Kyoto / Type A2).